The chain runs to 542 residues: CTP synthase (542 aa).

The amidoligase domain stretch occupies residues 1-265 (MARYIFITGG…DDEVLAAFGL (265 aa)). Ser13 serves as a coordination point for CTP. A UTP-binding site is contributed by Ser13. 14–19 (SLGKGL) contributes to the ATP binding site. Position 54 (Tyr54) interacts with L-glutamine. Residue Asp71 participates in ATP binding. Residues Asp71 and Glu139 each coordinate Mg(2+). CTP contacts are provided by residues 146-148 (DIE), 186-191 (KTKPTQ), and Lys222. Residues 186 to 191 (KTKPTQ) and Lys222 contribute to the UTP site. 238 to 240 (RDA) serves as a coordination point for ATP. In terms of domain architecture, Glutamine amidotransferase type-1 spans 290-541 (TIAIVGKYTG…IQAAVVQSRL (252 aa)). Gly352 lines the L-glutamine pocket. Catalysis depends on Cys379, which acts as the Nucleophile; for glutamine hydrolysis. L-glutamine contacts are provided by residues 380–383 (FGMQ), Glu403, and Arg469. Active-site residues include His514 and Glu516.

It belongs to the CTP synthase family. In terms of assembly, homotetramer.

It carries out the reaction UTP + L-glutamine + ATP + H2O = CTP + L-glutamate + ADP + phosphate + 2 H(+). The enzyme catalyses L-glutamine + H2O = L-glutamate + NH4(+). It catalyses the reaction UTP + NH4(+) + ATP = CTP + ADP + phosphate + 2 H(+). The protein operates within pyrimidine metabolism; CTP biosynthesis via de novo pathway; CTP from UDP: step 2/2. With respect to regulation, allosterically activated by GTP, when glutamine is the substrate; GTP has no effect on the reaction when ammonia is the substrate. The allosteric effector GTP functions by stabilizing the protein conformation that binds the tetrahedral intermediate(s) formed during glutamine hydrolysis. Inhibited by the product CTP, via allosteric rather than competitive inhibition. In terms of biological role, catalyzes the ATP-dependent amination of UTP to CTP with either L-glutamine or ammonia as the source of nitrogen. Regulates intracellular CTP levels through interactions with the four ribonucleotide triphosphates. The protein is CTP synthase of Nitrobacter hamburgensis (strain DSM 10229 / NCIMB 13809 / X14).